The primary structure comprises 183 residues: Adenine phosphoribosyltransferase (183 aa).

The protein belongs to the purine/pyrimidine phosphoribosyltransferase family. In terms of assembly, homodimer.

It localises to the cytoplasm. The catalysed reaction is AMP + diphosphate = 5-phospho-alpha-D-ribose 1-diphosphate + adenine. It functions in the pathway purine metabolism; AMP biosynthesis via salvage pathway; AMP from adenine: step 1/1. In terms of biological role, catalyzes a salvage reaction resulting in the formation of AMP, that is energically less costly than de novo synthesis. This Salmonella typhi protein is Adenine phosphoribosyltransferase.